Here is a 714-residue protein sequence, read N- to C-terminus: Fatty acid oxidation complex subunit alpha (714 aa).

Residues 1 to 190 form an enoyl-CoA hydratase region; sequence MEMASAFTLN…KLGLVDDVVP (190 aa). The interval 306 to 714 is 3-hydroxyacyl-CoA dehydrogenase; sequence APLNSVGILG…FWKTTATDLQ (409 aa).

The protein in the N-terminal section; belongs to the enoyl-CoA hydratase/isomerase family. It in the central section; belongs to the 3-hydroxyacyl-CoA dehydrogenase family. Heterotetramer of two alpha chains (FadJ) and two beta chains (FadI).

It is found in the cytoplasm. It catalyses the reaction a (3S)-3-hydroxyacyl-CoA = a (2E)-enoyl-CoA + H2O. The enzyme catalyses a 4-saturated-(3S)-3-hydroxyacyl-CoA = a (3E)-enoyl-CoA + H2O. It carries out the reaction a (3S)-3-hydroxyacyl-CoA + NAD(+) = a 3-oxoacyl-CoA + NADH + H(+). The catalysed reaction is (3S)-3-hydroxybutanoyl-CoA = (3R)-3-hydroxybutanoyl-CoA. It participates in lipid metabolism; fatty acid beta-oxidation. Its function is as follows. Catalyzes the formation of a hydroxyacyl-CoA by addition of water on enoyl-CoA. Also exhibits 3-hydroxyacyl-CoA epimerase and 3-hydroxyacyl-CoA dehydrogenase activities. The protein is Fatty acid oxidation complex subunit alpha of Escherichia coli O127:H6 (strain E2348/69 / EPEC).